A 177-amino-acid polypeptide reads, in one-letter code: Voltage-dependent L-type calcium channel subunit alpha-1C (177 aa).

The helical transmembrane segment at 27–45 (ITFFRLFRVMRLVKLLSRG) threads the bilayer. The helical transmembrane segment at 64–84 (YVALLIVMLFFIYAVIGMQVF) threads the bilayer. Asn90 carries an N-linked (GlcNAc...) asparagine glycan. The pore-forming intramembrane region spans 107-125 (AVLLLFRCATGEAWQEIML). Positions 116-119 (TGEA) match the Selectivity filter of repeat IV motif. Cys133 and Cys149 are disulfide-bonded. Asn141 carries an N-linked (GlcNAc...) asparagine glycan. The chain crosses the membrane as a helical span at residues 154 to 177 (AVFYFISFYMLCAFLIIDLFVAVI).

Belongs to the calcium channel alpha-1 subunit (TC 1.A.1.11) family. CACNA1C subfamily. In terms of assembly, component of a calcium channel complex consisting of a pore-forming alpha subunit (CACNA1C) and ancillary beta, gamma and delta subunits. The channel complex contains alpha, beta, gamma and delta subunits in a 1:1:1:1 ratio, i.e. it contains only one of each type of subunit. CACNA1C channel activity is modulated by ancillary subunits, such as CACNB2, CACNB3, CACNA2D1 and CACNA2D4. Post-translationally, phosphorylation by PKA activates the channel.

It localises to the cell membrane. It is found in the perikaryon. The protein resides in the postsynaptic density membrane. The protein localises to the cell projection. Its subcellular location is the dendrite. It localises to the sarcolemma. It is found in the T-tubule. The catalysed reaction is Ca(2+)(in) = Ca(2+)(out). Inhibited by dihydropyridines (DHP), such as isradipine. Channel activity is regulated by Ca(2+) and calmodulin. Its function is as follows. Pore-forming, alpha-1C subunit of the voltage-gated calcium channel that gives rise to L-type calcium currents. Mediates influx of calcium ions into the cytoplasm, and thereby triggers calcium release from the sarcoplasm. Plays an important role in excitation-contraction coupling in the heart. Required for normal heart development and normal regulation of heart rhythm. Required for normal contraction of smooth muscle cells in blood vessels and in the intestine. Essential for normal blood pressure regulation via its role in the contraction of arterial smooth muscle cells. Long-lasting (L-type) calcium channels belong to the 'high-voltage activated' (HVA) group. The polypeptide is Voltage-dependent L-type calcium channel subunit alpha-1C (CACNA1C) (Gallus gallus (Chicken)).